The primary structure comprises 897 residues: MQDKYTPAEVERAAHSHWTARDAYRVTEDAGKKKFYACSMLPYPSGKLHMGHVRNYTINDMLTRYLRMNGHNVLMPMGWDAFGLPAENAALKNGVPPAQWTYDNIAYMKKQMQAMGLAIDWSREVATCDPDYYKWNQWLFLKMLEKGIAYRKTQVVNWDPVDQTVLANEQVIDGRGWRTGALVEKREIPGYYLKITDYAQELLDHVQVGNPNATLTGWPDKVRLMQENWIGKSEGVRFAFTHDIRGEDGQPIGDGRMYVFTTRADTIMGVTFCAVAPEHPLAAHAARSNPDVAAFIQECKTGGTTEAELATQEKKGVRTGLTVTHPLTDEPIEVWVGNYVLMGYGDGAVMGVPAHDERDFAFALKYGIEIKQVVLVDGETFDYHRWQDWYGDKQNGVTINSDNFSGLSYQEAVSAVAHALQEKGLGEKKTTWRLRDWGVSRQRYWGTPIPIIHCDEHGAVPVPEKDLPVVLPQDCIPDGSGNPLHKHEGFHAGVKCPVCGKAARRETDTMDTFVDSSWYFMRYCDPKNADAMVAGGADYWMPMDQYIGGIEHAILHLLYARFWTKVMRDLGLVKVDEPFTKLLTQGMVLNHIYSRRTDKGGKEYFWPHDVEHIQDEAGKITGARLKNAVGDLPAGTPIDYEGVGTMSKSKNNGVDPQELIEKYGADTARLYTMFTAPPEATLEWNDAAVEGSYRFLRRVWNFGVKLAGIDAAATEAAIQGAQSLQDVQFGKEAKALRLEIHTVLKQVDYDYQRMQYNTVVSGAMKMLNALEDFKSADAPGGLVALIEGFGILLRVLYPATPHIAHGLWSGLGYAGSLGDLLDAPWPQVDAGALMQDEIELVLQINGKLRGAIRVPSGADKAEIERIALASEDFHKHAAGAAPKKVVVVPGRLVNVVV.

The 'HIGH' region signature appears at 42 to 52; the sequence is PYPSGKLHMGH. The 'KMSKS' region motif lies at 645–649; the sequence is TMSKS. Residue K648 participates in ATP binding.

The protein belongs to the class-I aminoacyl-tRNA synthetase family.

It is found in the cytoplasm. The catalysed reaction is tRNA(Leu) + L-leucine + ATP = L-leucyl-tRNA(Leu) + AMP + diphosphate. This chain is Leucine--tRNA ligase, found in Paracidovorax citrulli (strain AAC00-1) (Acidovorax citrulli).